Here is a 354-residue protein sequence, read N- to C-terminus: tRNA-specific 2-thiouridylase MnmA (354 aa).

Residues 6–13 (LLSGGVDS) and leucine 33 contribute to the ATP site. Cysteine 100 acts as the Nucleophile in catalysis. Cysteine 100 and cysteine 195 are disulfide-bonded. Glycine 123 provides a ligand contact to ATP. Positions 145 to 147 (KDQ) are interaction with tRNA. Cysteine 195 serves as the catalytic Cysteine persulfide intermediate.

The protein belongs to the MnmA/TRMU family.

The protein resides in the cytoplasm. The enzyme catalyses S-sulfanyl-L-cysteinyl-[protein] + uridine(34) in tRNA + AH2 + ATP = 2-thiouridine(34) in tRNA + L-cysteinyl-[protein] + A + AMP + diphosphate + H(+). Functionally, catalyzes the 2-thiolation of uridine at the wobble position (U34) of tRNA, leading to the formation of s(2)U34. This is tRNA-specific 2-thiouridylase MnmA from Borrelia hermsii (strain HS1 / DAH).